The sequence spans 426 residues: Melibiose/raffinose/stachyose-binding protein MelE (426 aa).

An N-terminal signal peptide occupies residues 1–18; sequence MKHTFVLFLSLILLVLPG. C19 carries the N-palmitoyl cysteine lipid modification. A lipid anchor (S-diacylglycerol cysteine) is attached at C19.

Belongs to the bacterial solute-binding protein 1 family. In terms of assembly, the complex is composed of two ATP-binding proteins (MsmX), two transmembrane proteins (MelC and MelD) and a solute-binding protein (MelE).

The protein resides in the cell membrane. Part of the ABC transporter complex MelEDC-MsmX involved in melibiose, raffinose and stachyose import. Binds melibiose, raffinose and stachyose. In Bacillus subtilis (strain 168), this protein is Melibiose/raffinose/stachyose-binding protein MelE.